Reading from the N-terminus, the 142-residue chain is 3-hydroxyacyl-[acyl-carrier-protein] dehydratase FabZ (142 aa).

Histidine 47 is a catalytic residue.

The protein belongs to the thioester dehydratase family. FabZ subfamily.

The protein resides in the cytoplasm. The catalysed reaction is a (3R)-hydroxyacyl-[ACP] = a (2E)-enoyl-[ACP] + H2O. Functionally, involved in unsaturated fatty acids biosynthesis. Catalyzes the dehydration of short chain beta-hydroxyacyl-ACPs and long chain saturated and unsaturated beta-hydroxyacyl-ACPs. In Thermoanaerobacter sp. (strain X514), this protein is 3-hydroxyacyl-[acyl-carrier-protein] dehydratase FabZ.